The sequence spans 1738 residues: Sodium leak channel NALCN (1738 aa).

Residues 1-36 lie on the Cytoplasmic side of the membrane; it reads MLKRKQSSRVEAQPVTDFGPDESLSDNADILWINKP. The chain crosses the membrane as a helical span at residues 37–57; sequence WVHSLLRICAIISVISVCMNT. Over 58–65 the chain is Extracellular; it reads PMTFEHYP. The helical transmembrane segment at 66–90 threads the bilayer; sequence PLQYVTFTLDTLLMFLYTAEMIAKM. Residues 91-106 lie on the Cytoplasmic side of the membrane; that stretch reads HIRGIVKGDSSYVKDR. Residues 107–129 form a helical membrane-spanning segment; it reads WCVFDGFMVFCLWVSLVLQVFEI. The Extracellular portion of the chain corresponds to 130–137; sequence ADIVDQMS. Residues 138–158 traverse the membrane as a helical; Voltage-sensor segment; it reads PWGMLRIPRPLIMIRAFRIYF. At 159–173 the chain is on the cytoplasmic side; the sequence is RFELPRTRITNILKR. The helical transmembrane segment at 174–199 threads the bilayer; it reads SGEQIWSVSIFLLFFLLLYGILGVQM. At 200 to 269 the chain is on the extracellular side; the sequence is FGTFTYHCVV…YSGFNEIGTS (70 aa). Intrachain disulfides connect cysteine 207/cysteine 239 and cysteine 229/cysteine 245. N-linked (GlcNAc...) asparagine glycans are attached at residues asparagine 210 and asparagine 216. Positions 270–289 form an intramembrane region, pore-forming; that stretch reads IFTVYEAASQEGWVFLMYRA. Residues 290-294 lie on the Extracellular side of the membrane; it reads IDSFP. The chain crosses the membrane as a helical span at residues 295–322; that stretch reads RWRSYFYFITLIFFLAWLVKNVFIAVII. Residues 323-382 are Cytoplasmic-facing; the sequence is ETFAEIRVQFQQMWGSRSSTTSTATTQMFHEDAAGGWQLVAVDVNKPQGRAPACLQKMMR. The chain crosses the membrane as a helical span at residues 383-403; the sequence is SSVFHMFILSMVTVDVIVAAS. The Extracellular segment spans residues 404–416; sequence NYYKGENFRRQYD. The chain crosses the membrane as a helical span at residues 417–439; that stretch reads EFYLAEVAFTVLFDLEALLKIWC. The Cytoplasmic portion of the chain corresponds to 440-447; the sequence is LGFTGYIS. A helical membrane pass occupies residues 448–468; it reads SSLHKFELLLVIGTTLHVYPD. The Extracellular segment spans residues 469–472; it reads LYHS. The chain crosses the membrane as a helical; Voltage-sensor span at residues 473–492; sequence QFTYFQVLRVVRLIKISPAL. Residues 493–502 are Cytoplasmic-facing; that stretch reads EDFVYKIFGP. The helical transmembrane segment at 503–530 threads the bilayer; sequence GKKLGSLVVFTASLLIVMSAISLQMFCF. Over 531-543 the chain is Extracellular; that stretch reads VEELDRFTTFPRA. An intramembrane region (pore-forming) is located at residues 544–563; that stretch reads FMSMFQILTQEGWVDVMDQT. Topologically, residues 564–569 are extracellular; it reads LNAVGH. A helical membrane pass occupies residues 570 to 599; the sequence is MWAPVVAIYFILYHLFATLILLSLFVAVIL. Topologically, residues 600 to 886 are cytoplasmic; that stretch reads DNLELDEDLK…QLYDLLGLVT (287 aa). Positions 762-785 are disordered; the sequence is QERRSLRHGSNSQRISRGKSLETL. A coiled-coil region spans residues 795 to 830; that stretch reads YRNAQREDSEIKMIQEKKEQAEMKRKVQEEELRENH. Residues 887 to 906 form a helical membrane-spanning segment; the sequence is YLDWVMIIVTICSCISMMFE. Residues 907-915 lie on the Extracellular side of the membrane; sequence SPFRRVMHA. A helical membrane pass occupies residues 916-939; the sequence is PTLQIAEYVFVIFMSIELNLKIMA. Over 940–947 the chain is Cytoplasmic; sequence DGLFFTPT. A helical membrane pass occupies residues 948 to 972; that stretch reads AVIRDFGGVMDIFIYLVSLIFLCWM. The Extracellular portion of the chain corresponds to 973–980; the sequence is PQNVPAES. A helical; Voltage-sensor membrane pass occupies residues 981–1003; sequence GAQLLMVLRCLRPLRIFKLVPQM. At 1004–1015 the chain is on the cytoplasmic side; sequence RKVVRELFSGFK. A helical membrane pass occupies residues 1016–1039; that stretch reads EIFLVSILLLTLMLVFASFGVQLF. Topologically, residues 1040 to 1104 are extracellular; that stretch reads AGKLAKCNDP…NFNFDNVGNA (65 aa). Residues cysteine 1046 and cysteine 1057 are joined by a disulfide bond. The N-linked (GlcNAc...) asparagine glycan is linked to asparagine 1064. Positions 1105 to 1124 form an intramembrane region, pore-forming; the sequence is MLALFEVLSLKGWVEVRDVI. Residues 1125–1129 are Extracellular-facing; that stretch reads IHRVG. A helical transmembrane segment spans residues 1130–1159; the sequence is PIHGIYIHVFVFLGCMIGLTLFVGVVIANF. Residues 1160–1210 are Cytoplasmic-facing; sequence NENKGTALLTVDQRRWEDLKSRLKIAQPLHLPPRPDNDGFRAKMYDITQHP. A helical membrane pass occupies residues 1211 to 1227; the sequence is FFKRTIALLVLAQSVLL. The Extracellular portion of the chain corresponds to 1228–1236; the sequence is SVKWDVEDP. A helical membrane pass occupies residues 1237–1260; sequence VTVPLATMSVVFTFIFVLEVTMKI. Over 1261 to 1271 the chain is Cytoplasmic; sequence IAMSPAGFWQS. The chain crosses the membrane as a helical span at residues 1272-1293; the sequence is RRNRYDLLVTSLGVVWVVLHFA. The Extracellular portion of the chain corresponds to 1294 to 1296; that stretch reads LLN. Residues 1297–1318 form a helical; Voltage-sensor membrane-spanning segment; that stretch reads AYTYMMGACVIVFRFFSICGKH. The Cytoplasmic portion of the chain corresponds to 1319-1331; it reads VTLKMLLLTVVVS. A helical membrane pass occupies residues 1332–1357; it reads MYKSFFIIVGMFLLLLCYAFAGVVLF. Residues 1358 to 1378 lie on the Extracellular side of the membrane; it reads GTVKYGENINRHANFSSAGKA. Residues 1379–1398 constitute an intramembrane region (pore-forming); the sequence is ITVLFRIVTGEDWNKIMHDC. At 1399-1420 the chain is on the extracellular side; it reads MVQPPFCTPDEFTYWATDCGNY. A disulfide bridge connects residues cysteine 1405 and cysteine 1417. The helical transmembrane segment at 1421-1447 threads the bilayer; it reads AGALMYFCSFYVIIAYIMLNLLVAIIV. At 1448 to 1738 the chain is on the cytoplasmic side; the sequence is ENFSLFYSTE…DESGDDLLDI (291 aa). The tract at residues 1611 to 1678 is disordered; sequence PPSIETTQPS…QWRLPSAPKP (68 aa). The segment covering 1613-1632 has biased composition (polar residues); that stretch reads SIETTQPSEDTNANSQDNSM. Over residues 1633–1648 the composition is skewed to low complexity; that stretch reads QPETSSQQQLLSPTLS.

The protein belongs to the NALCN family. In terms of assembly, found in a complex with NALCN, UNC79, UNC80 and NACL1; these auxiliary subunits are indispensable for the function of NALCN channel. Interacts with UNC80; required for the NALCN activation/inhibition by GPCRs in neurons. Found in a complex with NALCN, UNC79 and UNC80; UNC80 bridges NALCN to UNC79. Interacts with CHRM3. Post-translationally, phosphorylated on tyrosine residues.

It is found in the cell membrane. The enzyme catalyses Na(+)(in) = Na(+)(out). Its activity is regulated as follows. Inhibited by low micromolar concentrations of Gd(3+) and high micromolar concentrations of verapamil. Insensitive to tetrodotoxin (TTX) and potentiated by low external Ca(2+) concentration. In terms of biological role, voltage-gated ion channel responsible for the resting Na(+) permeability that controls neuronal excitability. NALCN channel functions as a multi-protein complex, which consists at least of NALCN, NALF1, UNC79 and UNC80. NALCN is the voltage-sensing, pore-forming subunit of the NALCN channel complex. NALCN channel complex is constitutively active and conducts monovalent cations but is blocked by physiological concentrations of extracellular divalent cations. In addition to its role in regulating neuronal excitability, is required for normal respiratory rhythm, systemic osmoregulation by controlling the serum sodium concentration and in the regulation of the intestinal pace-making activity in the interstitial cells of Cajal. NALCN channel is also activated by neuropeptides such as neurotensin and substance P (SP) through a SRC family kinases-dependent pathway. In addition, NALCN activity is enhanced/modulated by several GPCRs, such as CHRM3. This chain is Sodium leak channel NALCN, found in Homo sapiens (Human).